The primary structure comprises 146 residues: Large ribosomal subunit protein uL16c (146 aa).

The protein belongs to the universal ribosomal protein uL16 family. Part of the 50S ribosomal subunit.

The protein localises to the plastid. It localises to the chloroplast. The polypeptide is Large ribosomal subunit protein uL16c (Angiopteris evecta (Mule's foot fern)).